We begin with the raw amino-acid sequence, 429 residues long: 3-phosphoshikimate 1-carboxyvinyltransferase (429 aa).

3-phosphoshikimate is bound by residues K20, S21, and R25. K20 lines the phosphoenolpyruvate pocket. 2 residues coordinate phosphoenolpyruvate: G89 and R118. Positions 164, 165, 166, 192, 311, and 338 each coordinate 3-phosphoshikimate. A phosphoenolpyruvate-binding site is contributed by Q166. D311 serves as the catalytic Proton acceptor. Residues R342 and R384 each contribute to the phosphoenolpyruvate site.

Belongs to the EPSP synthase family. Monomer.

It localises to the cytoplasm. It carries out the reaction 3-phosphoshikimate + phosphoenolpyruvate = 5-O-(1-carboxyvinyl)-3-phosphoshikimate + phosphate. It participates in metabolic intermediate biosynthesis; chorismate biosynthesis. Functionally, catalyzes the transfer of the enolpyruvyl moiety of phosphoenolpyruvate (PEP) to the 5-hydroxyl of shikimate-3-phosphate (S3P) to produce enolpyruvyl shikimate-3-phosphate and inorganic phosphate. This Methanococcus maripaludis (strain C6 / ATCC BAA-1332) protein is 3-phosphoshikimate 1-carboxyvinyltransferase.